A 155-amino-acid chain; its full sequence is Endoribonuclease YbeY (155 aa).

The Zn(2+) site is built by His-120, His-124, and His-130.

Belongs to the endoribonuclease YbeY family. Zn(2+) serves as cofactor.

It is found in the cytoplasm. Functionally, single strand-specific metallo-endoribonuclease involved in late-stage 70S ribosome quality control and in maturation of the 3' terminus of the 16S rRNA. The protein is Endoribonuclease YbeY of Alkaliphilus metalliredigens (strain QYMF).